We begin with the raw amino-acid sequence, 334 residues long: Zinc-finger homeodomain protein 10 (334 aa).

A compositionally biased stretch (low complexity) spans 1 to 15; that stretch reads MMDMTPTITTTTTPT. 2 disordered regions span residues 1–33 and 103–164; these read MMDMTPTITTTTTPTPKSPEPESETPTRIQPAK and FHRR…LLSL. The ZF-HD dimerization-type; degenerate zinc-finger motif lies at 56 to 107; it reads YKECLKNHAAALGGHALDGCGEFMPSPSSISSDPTSLKCAACGCHRNFHRRD. Pro residues predominate over residues 136-155; that stretch reads PPPPPPPPPRSPNSASPPPI. Residues 200–263 constitute a DNA-binding region (homeobox); it reads RKRFRTKFSQ…NNKNTFNRRD (64 aa). Positions 292 to 334 are disordered; sequence NGHHGVGGGGELHQSVSSGGGGGGFDSDSGGANGGNVNGSSSS. Residues 309–328 are compositionally biased toward gly residues; the sequence is SGGGGGGFDSDSGGANGGNV.

Homo- and heterodimer with other ZFHD proteins. Interacts with MIF1, MIF2 and MIF3; these interactions prevent nuclear localization and DNA-binding to inhibit transcription regulation activity. Binds to ZHD1, ZHD2, ZHD4, ZHD5, ZHD6, ZHD7 and ZHD8. Interacts with KIN10 and KIN11. As to expression, mostly expressed in rosettes (e.g. young leaves), flowers (e.g. styles), siliques and inflorescence.

The protein resides in the nucleus. Functionally, putative transcription factor. Probably involved in establishing polarity during leaf development through the gibberellic acid (GA) signaling pathway. This Arabidopsis thaliana (Mouse-ear cress) protein is Zinc-finger homeodomain protein 10 (ZHD10).